Reading from the N-terminus, the 795-residue chain is Phenylalanine--tRNA ligase beta subunit (795 aa).

Residues 39-148 form the tRNA-binding domain; the sequence is AAEFNGVVIG…LDAPLGTDLR (110 aa). Positions 401–476 constitute a B5 domain; sequence PKPAQILLRR…RIYGYNNIPN (76 aa). Residues Asp454, Asp460, Glu463, and Glu464 each coordinate Mg(2+). Residues 701–794 form the FDX-ACB domain; that stretch reads SKFPANRRDI…LKTEFNASLR (94 aa).

The protein belongs to the phenylalanyl-tRNA synthetase beta subunit family. Type 1 subfamily. As to quaternary structure, tetramer of two alpha and two beta subunits. It depends on Mg(2+) as a cofactor.

Its subcellular location is the cytoplasm. The enzyme catalyses tRNA(Phe) + L-phenylalanine + ATP = L-phenylalanyl-tRNA(Phe) + AMP + diphosphate + H(+). The protein is Phenylalanine--tRNA ligase beta subunit of Shewanella oneidensis (strain ATCC 700550 / JCM 31522 / CIP 106686 / LMG 19005 / NCIMB 14063 / MR-1).